Here is a 448-residue protein sequence, read N- to C-terminus: Exodeoxyribonuclease 7 large subunit (448 aa).

This sequence belongs to the XseA family. Heterooligomer composed of large and small subunits.

The protein resides in the cytoplasm. The catalysed reaction is Exonucleolytic cleavage in either 5'- to 3'- or 3'- to 5'-direction to yield nucleoside 5'-phosphates.. In terms of biological role, bidirectionally degrades single-stranded DNA into large acid-insoluble oligonucleotides, which are then degraded further into small acid-soluble oligonucleotides. This chain is Exodeoxyribonuclease 7 large subunit, found in Shewanella sp. (strain MR-7).